We begin with the raw amino-acid sequence, 353 residues long: Replication-associated protein (353 aa).

The 109-residue stretch at 8–116 folds into the CRESS-DNA virus Rep endonuclease domain; it reads RVQSKNYFLT…DGVTIEWGQF (109 aa). Residues 15–18 carry the RCR-1 motif; sequence FLTY. A divalent metal cation is bound by residues glutamate 49, histidine 57, and histidine 59. Residues 57-59 carry the RCR-2 motif; it reads HLH. The active-site For DNA cleavage activity is the tyrosine 103. The RCR-3 signature appears at 103 to 106; the sequence is YIDK. Aspartate 107 serves as a coordination point for a divalent metal cation. Residues 143-153 form a binding to RBR1 region; it reads IESALTILKEE. The tract at residues 156–176 is oligomerization; the sequence is KDYVLQNHNIRSNLERIFFKV. 222–229 serves as a coordination point for ATP; sequence GDSRTGKT.

This sequence belongs to the geminiviridae Rep protein family. In terms of assembly, homooligomer. Interacts with the replication enhancer protein (REn). Interacts with host retinoblastoma-related protein 1 (RBR1), and may thereby induce the transcription of host replicative enzymes even if the cell is not dividing anymore. Interacts with host PCNA. Interacts with host SCE1 protein. Binds to host RAD54 protein to ensure geminiviral replication. Mg(2+) is required as a cofactor. It depends on Mn(2+) as a cofactor.

Its subcellular location is the host nucleus. Its function is as follows. Essential for the replication of viral ssDNA. The closed circular ssDNA genome is first converted to a superhelical dsDNA. Rep binds a specific region at the genome origin of replication. It introduces an endonucleolytic nick within the conserved sequence 5'-TAATATTAC-3' in the intergenic region of the genome present in all geminiviruses, thereby initiating the rolling circle replication (RCR). Following cleavage, binds covalently to the 5'-phosphate of DNA as a tyrosyl ester. The cleavage gives rise to a free 3'-OH that serves as a primer for the cellular DNA polymerase. The polymerase synthesizes the (+) strand DNA by rolling circle mechanism. After one round of replication, a Rep-catalyzed nucleotidyl transfer reaction releases a circular single-stranded virus genome, thereby terminating the replication. Displays origin-specific DNA cleavage, nucleotidyl transferase, ATPase and helicase activities. In Macroptilium lathyroides (Lima bean), this protein is Replication-associated protein.